A 157-amino-acid polypeptide reads, in one-letter code: Transcriptional repressor NrdR (157 aa).

The segment at 3 to 34 (CSNCQNKNTKVLDSRPIEEGRAIRRRRECERC) is a zinc-finger region. An ATP-cone domain is found at 49–139 (LIVVKKDGVR…VYRQFKDITV (91 aa)).

The protein belongs to the NrdR family. The cofactor is Zn(2+).

Functionally, negatively regulates transcription of bacterial ribonucleotide reductase nrd genes and operons by binding to NrdR-boxes. The chain is Transcriptional repressor NrdR from Oceanobacillus iheyensis (strain DSM 14371 / CIP 107618 / JCM 11309 / KCTC 3954 / HTE831).